A 975-amino-acid polypeptide reads, in one-letter code: Glycine dehydrogenase (decarboxylating) (975 aa).

Residue K723 is modified to N6-(pyridoxal phosphate)lysine.

It belongs to the GcvP family. The glycine cleavage system is composed of four proteins: P, T, L and H. The cofactor is pyridoxal 5'-phosphate.

It catalyses the reaction N(6)-[(R)-lipoyl]-L-lysyl-[glycine-cleavage complex H protein] + glycine + H(+) = N(6)-[(R)-S(8)-aminomethyldihydrolipoyl]-L-lysyl-[glycine-cleavage complex H protein] + CO2. The glycine cleavage system catalyzes the degradation of glycine. The P protein binds the alpha-amino group of glycine through its pyridoxal phosphate cofactor; CO(2) is released and the remaining methylamine moiety is then transferred to the lipoamide cofactor of the H protein. In Burkholderia ambifaria (strain ATCC BAA-244 / DSM 16087 / CCUG 44356 / LMG 19182 / AMMD) (Burkholderia cepacia (strain AMMD)), this protein is Glycine dehydrogenase (decarboxylating).